The chain runs to 450 residues: ATP-dependent protease ATPase subunit HslU (450 aa).

Residues Val-29, 71–76 (GVGKTE), Asp-261, Glu-328, and Arg-400 contribute to the ATP site.

Belongs to the ClpX chaperone family. HslU subfamily. As to quaternary structure, a double ring-shaped homohexamer of HslV is capped on each side by a ring-shaped HslU homohexamer. The assembly of the HslU/HslV complex is dependent on binding of ATP.

It localises to the cytoplasm. Its function is as follows. ATPase subunit of a proteasome-like degradation complex; this subunit has chaperone activity. The binding of ATP and its subsequent hydrolysis by HslU are essential for unfolding of protein substrates subsequently hydrolyzed by HslV. HslU recognizes the N-terminal part of its protein substrates and unfolds these before they are guided to HslV for hydrolysis. The polypeptide is ATP-dependent protease ATPase subunit HslU (Rickettsia prowazekii (strain Madrid E)).